Here is a 389-residue protein sequence, read N- to C-terminus: Transaldolase (389 aa).

The active-site Schiff-base intermediate with substrate is lysine 136. EF-hand domains are found at residues 330–365 and 365–388; these read ALNQ…FDAI and IDLN…VSKL. Aspartate 343, aspartate 345, aspartate 347, glutamate 354, aspartate 366, asparagine 368, aspartate 370, lysine 372, and glutamate 377 together coordinate Ca(2+).

Belongs to the transaldolase family. Type 1 subfamily.

The protein resides in the cytoplasm. It carries out the reaction D-sedoheptulose 7-phosphate + D-glyceraldehyde 3-phosphate = D-erythrose 4-phosphate + beta-D-fructose 6-phosphate. The protein operates within carbohydrate degradation; pentose phosphate pathway; D-glyceraldehyde 3-phosphate and beta-D-fructose 6-phosphate from D-ribose 5-phosphate and D-xylulose 5-phosphate (non-oxidative stage): step 2/3. Functionally, transaldolase is important for the balance of metabolites in the pentose-phosphate pathway. The chain is Transaldolase from Gloeobacter violaceus (strain ATCC 29082 / PCC 7421).